Consider the following 654-residue polypeptide: Protein LYK2 (654 aa).

The N-terminal stretch at 1–25 (MAVSVSKQYMTSLVVILLFISLSSL) is a signal peptide. The Extracellular segment spans residues 26-241 (SPTSTSHSCD…PSKKKRSKMK (216 aa)). 3 cysteine pairs are disulfide-bonded: Cys50/Cys102, Cys57/Cys163, and Cys100/Cys161. N-linked (GlcNAc...) asparagine glycans are attached at residues Asn103, Asn170, Asn193, and Asn204. One copy of the LysM; degenerate repeat lies at 177–217 (YPVGVRDSVSSLAVRFNTTEDAIVSANNKSGVVPLKPALIP). Residues 218–238 (LDHKPEKQGSRKRNPSKKKRS) are disordered. Basic residues predominate over residues 227–238 (SRKRNPSKKKRS). The helical transmembrane segment at 242 to 262 (LMIAVSSAIAGVCGLVTLMVF) threads the bilayer. The Cytoplasmic segment spans residues 263-654 (GYLHWKKETQ…PLVKKSSIID (392 aa)). In terms of domain architecture, Protein kinase spans 324–619 (TPRKPVLEIY…EIAERVSRLV (296 aa)). Residues 330–338 (LEIYAFEEL) and Lys368 contribute to the ATP site.

This sequence belongs to the protein kinase superfamily. Ser/Thr protein kinase family.

The protein resides in the cell membrane. May recognize microbe-derived N-acetylglucosamine (NAG)-containing ligands. In Arabidopsis thaliana (Mouse-ear cress), this protein is Protein LYK2 (LYK2).